Consider the following 670-residue polypeptide: Protein-glutamine gamma-glutamyltransferase 4 (670 aa).

N-linked (GlcNAc...) asparagine glycans are attached at residues Asn-151 and Asn-219. Cys-255 is an active-site residue. An N-linked (GlcNAc...) asparagine glycan is attached at Asn-288. Catalysis depends on residues His-314 and Asp-337. 4 residues coordinate Ca(2+): Asn-377, Asp-379, Glu-429, and Glu-434. Asn-456 and Asn-491 each carry an N-linked (GlcNAc...) asparagine glycan.

Belongs to the transglutaminase superfamily. Transglutaminase family. Homodimer. Requires Ca(2+) as cofactor. As to expression, expressed in the coagulating gland and in the dorsal part of the prostate. Not expressed in the brain, heart, kidney, liver, lung, muscle, pancreas, spleen, stomach, testis and thymus.

Its subcellular location is the secreted. It carries out the reaction L-glutaminyl-[protein] + L-lysyl-[protein] = [protein]-L-lysyl-N(6)-5-L-glutamyl-[protein] + NH4(+). Its function is as follows. Associated with the mammalian reproductive process. Plays an important role in the formation of the seminal coagulum through the cross-linking of specific proteins present in the seminal plasma. Transglutaminase is also required to stabilize the copulatory plug. This chain is Protein-glutamine gamma-glutamyltransferase 4, found in Mus musculus (Mouse).